The primary structure comprises 82 residues: MAEPETLPGRWLPECACLAETVSWEQSRLWSRLLCRPHFRHALPGLTGGSASRPSARSARLVRQPRMTLFSLDHRDGVDARC.

As to quaternary structure, forms a complex with cognate toxin MazF8.

Functionally, antitoxin component of a type II toxin-antitoxin (TA) system. Its cognate toxin is MazF8. The sequence is that of Antitoxin MazE8 (mazE8) from Mycobacterium tuberculosis (strain ATCC 25618 / H37Rv).